The following is a 173-amino-acid chain: MSKPKYPFEKRLEVVNHYFTTDDGYRIISARFGVPRTQVRTWVALYEKHGEKGLIPKPKGVSADPELRIKVVKAVIEQHMSLNQAAAHFMLAGSGSVARWLKVYEERGEAGLRALKIGTKRNIAISVDPEKAASALELSKDRRIEDLERQVRFLETRLMYLKKLKALAHPTKK.

Belongs to the IS150/IS1296 orfA family.

This Escherichia coli (strain K12) protein is Insertion element IS150 protein InsJ (insJ).